Here is a 109-residue protein sequence, read N- to C-terminus: Small ribosomal subunit protein uS17 (109 aa).

Belongs to the universal ribosomal protein uS17 family. As to quaternary structure, part of the 30S ribosomal subunit.

Its function is as follows. One of the primary rRNA binding proteins, it binds specifically to the 5'-end of 16S ribosomal RNA. The polypeptide is Small ribosomal subunit protein uS17 (Thermoplasma acidophilum (strain ATCC 25905 / DSM 1728 / JCM 9062 / NBRC 15155 / AMRC-C165)).